Reading from the N-terminus, the 150-residue chain is Actin-related protein 2/3 complex subunit 5-C (150 aa).

Positions 21–45 are disordered; it reads NKFVDEEEAGEGQQGPDEGEVDSAI.

This sequence belongs to the ARPC5 family. In terms of assembly, component of the Arp2/3 complex composed of actr2/arp2, actr3/arp3, arpc1 (arpc1a or arpc1b), arpc2, arpc3, arpc4 and arpc5.

It is found in the cytoplasm. Its subcellular location is the cytoskeleton. It localises to the cell projection. The protein resides in the nucleus. Component of the Arp2/3 complex, a multiprotein complex that mediates actin polymerization upon stimulation by nucleation-promoting factor (NPF). The Arp2/3 complex mediates the formation of branched actin networks in the cytoplasm, providing the force for cell motility. In addition to its role in the cytoplasmic cytoskeleton, the Arp2/3 complex also promotes actin polymerization in the nucleus, thereby regulating gene transcription and repair of damaged DNA. The Arp2/3 complex promotes homologous recombination (HR) repair in response to DNA damage by promoting nuclear actin polymerization, leading to drive motility of double-strand breaks (DSBs). This is Actin-related protein 2/3 complex subunit 5-C (arpc5-c) from Xenopus laevis (African clawed frog).